Reading from the N-terminus, the 221-residue chain is Uracil-DNA glycosylase (221 aa).

Catalysis depends on aspartate 64, which acts as the Proton acceptor.

The protein belongs to the uracil-DNA glycosylase (UDG) superfamily. UNG family.

It localises to the cytoplasm. The catalysed reaction is Hydrolyzes single-stranded DNA or mismatched double-stranded DNA and polynucleotides, releasing free uracil.. Excises uracil residues from the DNA which can arise as a result of misincorporation of dUMP residues by DNA polymerase or due to deamination of cytosine. The polypeptide is Uracil-DNA glycosylase (Mycoplasmopsis pulmonis (strain UAB CTIP) (Mycoplasma pulmonis)).